We begin with the raw amino-acid sequence, 99 residues long: Small ribosomal subunit protein eS24 (99 aa).

It belongs to the eukaryotic ribosomal protein eS24 family. May be present in 2 copies per 70S ribosome. Part of the 30S ribosomal subunit, where it binds 16S rRNA at its canonical site at the bse of the body, as well as a possible second 50S binding site near 23S rRNA helix 45.

The chain is Small ribosomal subunit protein eS24 from Pyrococcus furiosus (strain ATCC 43587 / DSM 3638 / JCM 8422 / Vc1).